The primary structure comprises 367 residues: Probable neutral protease 2 homolog MCYG_00239 (367 aa).

The signal sequence occupies residues 1-19; sequence MQVLVALAALSSLAAPVVG. Positions 20-190 are excised as a propeptide; sequence FSIPRGVPVS…DGPFTRIDKR (171 aa). Disulfide bonds link C198–C268, C275–C293, and C307–C367. H318 serves as a coordination point for Zn(2+). E319 is a catalytic residue. Zn(2+) contacts are provided by H322 and D333.

Belongs to the peptidase M35 family. Zn(2+) is required as a cofactor.

The protein localises to the secreted. The catalysed reaction is Preferential cleavage of bonds with hydrophobic residues in P1'. Also 3-Asn-|-Gln-4 and 8-Gly-|-Ser-9 bonds in insulin B chain.. Probable secreted metalloprotease that shows high activities on basic nuclear substrates such as histone and protamine. May be involved in virulence. This Arthroderma otae (strain ATCC MYA-4605 / CBS 113480) (Microsporum canis) protein is Probable neutral protease 2 homolog MCYG_00239.